Reading from the N-terminus, the 266-residue chain is Chymotrypsin-like elastase family member 1 (266 aa).

The first 16 residues, 1–16 (MLRFLVFASLVLYGHS), serve as a signal peptide directing secretion. A propeptide spans 17-26 (TQDFPETNAR) (activation peptide). Positions 27-264 (VVGGAEARRN…YISWMNNVIA (238 aa)) constitute a Peptidase S1 domain. A disulfide bridge connects residues C56 and C72. H71 acts as the Charge relay system in catalysis. 4 residues coordinate Ca(2+): D85, N87, Q90, and E95. Residue D119 is the Charge relay system of the active site. Cystine bridges form between C153/C220, C184/C200, and C210/C240. Residue S214 is the Charge relay system of the active site.

This sequence belongs to the peptidase S1 family. Elastase subfamily. Requires Ca(2+) as cofactor. Pancreas.

It localises to the secreted. It carries out the reaction Hydrolysis of proteins, including elastin. Preferential cleavage: Ala-|-Xaa.. Serine proteases that hydrolyze many proteins in addition to elastin. This is Chymotrypsin-like elastase family member 1 (Cela1) from Rattus norvegicus (Rat).